We begin with the raw amino-acid sequence, 104 residues long: Hydrogen cyanide synthase subunit HcnA (104 aa).

Residues 16–97 enclose the 2Fe-2S ferredoxin-type domain; sequence ADMTIHLNGQ…GMRVETESNR (82 aa). Cys60, Cys65, Cys68, and Cys81 together coordinate [2Fe-2S] cluster.

As to quaternary structure, heterotrimer of HcnA, HcnB and HcnC.

It localises to the cell membrane. It carries out the reaction glycine + 2 A = hydrogen cyanide + 2 AH2 + CO2. Its activity is regulated as follows. Oxygen is necessary for cyanogenesis. Activated by succinate, glycine methyl ester, glucose and D,L-methionine in addition to glycine. Phenazine methosulfate, methylene blue, 2,6-dichlorophenolindophenol (DCIP) and ferricyanide can replace oxygen for the reaction. Inhibited by pyrrolnitrin and acriflavine at 1 mM concentration. Its function is as follows. A three-component membrane-bound flavoenzyme that catalyzes the formation of hydrogen cyanide, a secondary metabolite, by transfer of electrons to a cyanide-resistant branch of the aerobic respiratory chain. This Pseudomonas aeruginosa (strain ATCC 15692 / DSM 22644 / CIP 104116 / JCM 14847 / LMG 12228 / 1C / PRS 101 / PAO1) protein is Hydrogen cyanide synthase subunit HcnA.